A 373-amino-acid polypeptide reads, in one-letter code: Chorismate synthase (373 aa).

Arg-48 and Arg-54 together coordinate NADP(+). Residues 125–127 (RSS), 248–249 (NA), Gly-288, 303–307 (KPTSS), and Arg-329 contribute to the FMN site.

This sequence belongs to the chorismate synthase family. Homotetramer. FMNH2 is required as a cofactor.

The catalysed reaction is 5-O-(1-carboxyvinyl)-3-phosphoshikimate = chorismate + phosphate. The protein operates within metabolic intermediate biosynthesis; chorismate biosynthesis; chorismate from D-erythrose 4-phosphate and phosphoenolpyruvate: step 7/7. Its function is as follows. Catalyzes the anti-1,4-elimination of the C-3 phosphate and the C-6 proR hydrogen from 5-enolpyruvylshikimate-3-phosphate (EPSP) to yield chorismate, which is the branch point compound that serves as the starting substrate for the three terminal pathways of aromatic amino acid biosynthesis. This reaction introduces a second double bond into the aromatic ring system. This Colwellia psychrerythraea (strain 34H / ATCC BAA-681) (Vibrio psychroerythus) protein is Chorismate synthase.